We begin with the raw amino-acid sequence, 980 residues long: Chitin binding domain containing chtb-2 (980 aa).

Positions 1–20 (MRTMHCFLFILLFCLGQVFT) are cleaved as a signal peptide. N-linked (GlcNAc...) asparagine glycans are attached at residues Asn187 and Asn190. 3 disordered regions span residues 310 to 354 (ERQQ…AELD), 431 to 451 (QEEE…QIRQ), and 486 to 512 (EILR…QQEA). Asn941 and Asn975 each carry an N-linked (GlcNAc...) asparagine glycan.

The chain is Chitin binding domain containing chtb-2 from Caenorhabditis elegans.